The sequence spans 296 residues: Sperm-activating peptides (296 aa).

Propeptides lie at residues 1–134 (MPPG…MYKK), 146–190 (MLSN…MILK), and 290–296 (EVEIKDW).

In terms of biological role, causes stimulation of sperm respiration and motility through intracellular alkalinization, transient elevations of cAMP, cGMP and calcium levels in sperm cells, and transient activation and subsequent inactivation of the membrane form of guanylate cyclase. The sequence is that of Sperm-activating peptides from Strongylocentrotus purpuratus (Purple sea urchin).